Consider the following 474-residue polypeptide: Trigger factor (474 aa).

One can recognise a PPIase FKBP-type domain in the interval 171-258 (GDVAVIDFQG…LKELKTRDLP (88 aa)). Positions 441-474 (TEVDAASATVETTATETAEEAPEAPKAKKGKKKA) are disordered. Residues 444 to 456 (DAASATVETTATE) show a composition bias toward low complexity.

It belongs to the FKBP-type PPIase family. Tig subfamily.

The protein resides in the cytoplasm. The enzyme catalyses [protein]-peptidylproline (omega=180) = [protein]-peptidylproline (omega=0). Involved in protein export. Acts as a chaperone by maintaining the newly synthesized protein in an open conformation. Functions as a peptidyl-prolyl cis-trans isomerase. In Synechococcus sp. (strain ATCC 27144 / PCC 6301 / SAUG 1402/1) (Anacystis nidulans), this protein is Trigger factor.